The following is a 178-amino-acid chain: RNA-binding protein (178 aa).

The interval 113-178 (PKIGSKNKKT…KGKGKRGGKR (66 aa)) is disordered. The span at 168-178 (SKGKGKRGGKR) shows a compositional bias: basic residues.

This sequence belongs to the phytoreovirus RNA-binding protein family.

Its subcellular location is the host cytoplasm. Constituent of viral factories. Binds to ssRNA and dsRNA. This Wound tumor virus (WTV) protein is RNA-binding protein.